A 482-amino-acid chain; its full sequence is Glutamyl-tRNA(Gln) amidotransferase subunit A (482 aa).

Catalysis depends on charge relay system residues K80 and S159. S183 acts as the Acyl-ester intermediate in catalysis.

This sequence belongs to the amidase family. GatA subfamily. In terms of assembly, heterotrimer of A, B and C subunits.

The catalysed reaction is L-glutamyl-tRNA(Gln) + L-glutamine + ATP + H2O = L-glutaminyl-tRNA(Gln) + L-glutamate + ADP + phosphate + H(+). In terms of biological role, allows the formation of correctly charged Gln-tRNA(Gln) through the transamidation of misacylated Glu-tRNA(Gln) in organisms which lack glutaminyl-tRNA synthetase. The reaction takes place in the presence of glutamine and ATP through an activated gamma-phospho-Glu-tRNA(Gln). The polypeptide is Glutamyl-tRNA(Gln) amidotransferase subunit A (Neorickettsia sennetsu (strain ATCC VR-367 / Miyayama) (Ehrlichia sennetsu)).